Here is an 83-residue protein sequence, read N- to C-terminus: Cytotoxin homolog 5V (83 aa).

An N-terminal signal peptide occupies residues 1–21; sequence MKTLLLTLVVVTIVCLDLGYT. Disulfide bonds link Cys-24/Cys-43, Cys-36/Cys-61, Cys-65/Cys-76, and Cys-77/Cys-82.

It belongs to the three-finger toxin family. Short-chain subfamily. Orphan group XV sub-subfamily. Expressed by the venom gland.

It is found in the secreted. The protein localises to the target cell membrane. In terms of biological role, has low cytotoxic activity. The sequence is that of Cytotoxin homolog 5V from Naja atra (Chinese cobra).